Consider the following 743-residue polypeptide: Probable TonB-dependent siderophore receptor PiuA (743 aa).

Residues 1 to 28 form the signal peptide; it reads MSLIRTRKKIVSSAIASSLSMIATTAMA. Residues 61–167 enclose the TBDR plug domain; the sequence is PLLDTPKSVS…VGGSINMISK (107 aa). The TBDR beta-barrel domain occupies 172–743; sequence GDFLEGSVAA…SAVLAVNFKY (572 aa). Intrachain disulfides connect Cys408–Cys416 and Cys627–Cys632.

This sequence belongs to the TonB-dependent receptor family.

Its subcellular location is the cell outer membrane. In terms of biological role, probably involved in the initial step of iron uptake by binding iron chelating siderophores, thereby allowing extraction of iron from the environment. May bind the siderophore, ferric enterobactin, with micromolar affinity. The chain is Probable TonB-dependent siderophore receptor PiuA from Acinetobacter baumannii (strain ATCC 19606 / DSM 30007 / JCM 6841 / CCUG 19606 / CIP 70.34 / NBRC 109757 / NCIMB 12457 / NCTC 12156 / 81).